The primary structure comprises 201 residues: 3-isopropylmalate dehydratase small subunit (201 aa).

Belongs to the LeuD family. LeuD type 1 subfamily. As to quaternary structure, heterodimer of LeuC and LeuD.

The catalysed reaction is (2R,3S)-3-isopropylmalate = (2S)-2-isopropylmalate. The protein operates within amino-acid biosynthesis; L-leucine biosynthesis; L-leucine from 3-methyl-2-oxobutanoate: step 2/4. Functionally, catalyzes the isomerization between 2-isopropylmalate and 3-isopropylmalate, via the formation of 2-isopropylmaleate. In Erwinia tasmaniensis (strain DSM 17950 / CFBP 7177 / CIP 109463 / NCPPB 4357 / Et1/99), this protein is 3-isopropylmalate dehydratase small subunit.